The primary structure comprises 466 residues: Na(+)/H(+) antiporter NhaA (466 aa).

Helical transmembrane passes span 32 to 52 (VGGV…NVPA), 74 to 94 (LSVQ…VAGI), 111 to 131 (AALP…VYTL), 142 to 162 (GWAV…AVIG), 172 to 192 (FLLT…AVFF), 195 to 215 (DLNF…WLLL), 221 to 241 (GWYV…NSGI), 280 to 300 (GLAV…GGAL), 310 to 330 (LGVV…GTWL), 348 to 368 (VFAV…IGEL), and 379 to 399 (EVKA…TTLL).

It belongs to the NhaA Na(+)/H(+) (TC 2.A.33) antiporter family.

It is found in the cell membrane. It catalyses the reaction Na(+)(in) + 2 H(+)(out) = Na(+)(out) + 2 H(+)(in). Functionally, na(+)/H(+) antiporter that extrudes sodium in exchange for external protons. This chain is Na(+)/H(+) antiporter NhaA, found in Streptomyces avermitilis (strain ATCC 31267 / DSM 46492 / JCM 5070 / NBRC 14893 / NCIMB 12804 / NRRL 8165 / MA-4680).